The following is a 354-amino-acid chain: MELAAILFSLFFAMNIGASGAAASMGVAYGSGAIKKKTYALILCAVGVFAGAVIGGGEVVKTISSGIIPEQTITLTIVCIIIGAAALSLFTANLLGIPLSTSEVTVGAVVGVGVAYKVLFVNNLLIIVSFWVFVPLFAFGFTYFVSKLFRYFKIEVKSSKKQKILGIVLLVAGFFEAFSAGMNNVANAVGPLVAAGVLDVGKGTLYGGAFVALGALLLGRRVLETNGKKITRFSKGEGILLSGTGAGLVIISSVFGMPVPLAQVTSSSIIGIGMAKNGPNVFHKQVVQTMLKVWIVSPFLSLSISYLLVSLFLKADYYSIFIMVSVLLAAGGAISLTKAIRKERRSVHEQGGGI.

A run of 8 helical transmembrane segments spans residues 3–23 (LAAI…GAAA), 40–60 (ALIL…GEVV), 77–97 (IVCI…LLGI), 125–145 (LIIV…TYFV), 164–184 (ILGI…GMNN), 197–217 (VLDV…GALL), 293–313 (VWIV…SLFL), and 320–340 (IFIM…TKAI).

This sequence belongs to the inorganic phosphate transporter (PiT) (TC 2.A.20) family.

The protein localises to the cell membrane. Its function is as follows. Involved in the import of sulfate. In Bacillus subtilis (strain 168), this protein is Sulfate permease CysP (cysP).